Consider the following 20-residue polypeptide: 54 kDa cell wall protein (20 aa).

The tract at residues 1 to 20 (KVPVDDQFRRVNNGGATDTR) is disordered.

The protein resides in the secreted. The protein localises to the cell wall. The protein is 54 kDa cell wall protein of Arabidopsis thaliana (Mouse-ear cress).